The chain runs to 173 residues: Alpha-crystallin A chain (173 aa).

Met-1 carries the post-translational modification N-acetylmethionine. The segment at 1–63 is required for complex formation with BFSP1 and BFSP2; that stretch reads MDVTIQHPWF…RTVLDSGISE (63 aa). The residue at position 6 (Gln-6) is a Deamidated glutamine; partial. Ser-45 carries the post-translational modification Phosphoserine. Gln-50 carries the deamidated glutamine; partial modification. The sHSP domain maps to 52-162; sequence LFRTVLDSGI…GHSERAIPVS (111 aa). Position 99 is an N6-acetyllysine (Lys-99). His-100 serves as a coordination point for Zn(2+). A Deamidated asparagine; partial modification is found at Asn-101. The Zn(2+) site is built by Glu-102 and His-107. Ser-122 is subject to Phosphoserine. A Deamidated asparagine; partial modification is found at Asn-123. Cys-131 and Cys-142 are oxidised to a cystine. Residues 146 to 173 form a disordered region; it reads VQSSMDDGHSERAIPVSREEKPSSVPSS. Gln-147 carries the post-translational modification Deamidated glutamine; partial. The span at 151–167 shows a compositional bias: basic and acidic residues; the sequence is DDGHSERAIPVSREEKP. His-154 contributes to the Zn(2+) binding site. Residue Ser-162 is glycosylated (O-linked (GlcNAc) serine).

This sequence belongs to the small heat shock protein (HSP20) family. Heteromer composed of three CRYAA and one CRYAB subunits. Inter-subunit bridging via zinc ions enhances stability, which is crucial as there is no protein turn over in the lens. Can also form homodimers and homotetramers (dimers of dimers) which serve as the building blocks of homooligomers. Within homooligomers, the zinc-binding motif is created from residues of 3 different molecules. His-100 and Glu-102 from one molecule are ligands of the zinc ion, and His-107 and His-154 residues from additional molecules complete the site with tetrahedral coordination geometry. Part of a complex required for lens intermediate filament formation composed of BFSP1, BFSP2 and CRYAA. Undergoes age-dependent proteolytical cleavage at the C-terminus.

It is found in the cytoplasm. The protein localises to the nucleus. Its function is as follows. Contributes to the transparency and refractive index of the lens. In its oxidized form (absence of intramolecular disulfide bond), acts as a chaperone, preventing aggregation of various proteins under a wide range of stress conditions. Required for the correct formation of lens intermediate filaments as part of a complex composed of BFSP1, BFSP2 and CRYAA. The chain is Alpha-crystallin A chain (CRYAA) from Orycteropus afer (Aardvark).